The sequence spans 240 residues: Large ribosomal subunit protein bL25 (240 aa).

Disordered stretches follow at residues 1–23 (MATV…ARAE) and 207–240 (PAAA…AKKK).

It belongs to the bacterial ribosomal protein bL25 family. CTC subfamily. In terms of assembly, part of the 50S ribosomal subunit; part of the 5S rRNA/L5/L18/L25 subcomplex. Contacts the 5S rRNA. Binds to the 5S rRNA independently of L5 and L18.

This is one of the proteins that binds to the 5S RNA in the ribosome where it forms part of the central protuberance. The protein is Large ribosomal subunit protein bL25 of Rhodopseudomonas palustris (strain BisB18).